Consider the following 67-residue polypeptide: Large ribosomal subunit protein bL35 (67 aa).

This sequence belongs to the bacterial ribosomal protein bL35 family.

This Deinococcus geothermalis (strain DSM 11300 / CIP 105573 / AG-3a) protein is Large ribosomal subunit protein bL35.